Consider the following 579-residue polypeptide: 2-isopropylmalate synthase (579 aa).

One can recognise a Pyruvate carboxyltransferase domain in the interval 40–314 (PRWCAVDLRD…DPMIDFSDID (275 aa)). The Mg(2+) site is built by D49, H253, H255, and N289. Residues 456-579 (SSKEDGQWGR…VNRAIRDAQA (124 aa)) are regulatory domain.

It belongs to the alpha-IPM synthase/homocitrate synthase family. LeuA type 2 subfamily. As to quaternary structure, homodimer. The cofactor is Mg(2+).

It localises to the cytoplasm. It catalyses the reaction 3-methyl-2-oxobutanoate + acetyl-CoA + H2O = (2S)-2-isopropylmalate + CoA + H(+). It participates in amino-acid biosynthesis; L-leucine biosynthesis; L-leucine from 3-methyl-2-oxobutanoate: step 1/4. Catalyzes the condensation of the acetyl group of acetyl-CoA with 3-methyl-2-oxobutanoate (2-ketoisovalerate) to form 3-carboxy-3-hydroxy-4-methylpentanoate (2-isopropylmalate). This Arthrobacter sp. (strain FB24) protein is 2-isopropylmalate synthase.